Here is a 532-residue protein sequence, read N- to C-terminus: MGKRDRTEDDEVVTKKVKLDKKDKKEKKEKKDKKDKKDKKDKKDKKDKKEKKEKKEKKEKKEEVSDEEEVAEEKPKMTYTASANTIKSSGEYTQCDDLTNVSQSTIDNYFKEHTITIEGEQMRPTMEFSHVTLDPRITKVLTKFPRPTPIQAVSWPYLLAGKDMVGVAETGSGKTFTFAVPALEHVLSTSGGKGVRVLVVSPTRELAMQIYDNIKELCDVVGLHAVCVYGGVPKEQQRSDLKRASFVIATPGRLCDLIDEGSCDLSKVSYLVLDEADRMLEKGFEEDIKKIIGSTRPTGRQTVMFSATWPPEVRKLAEGFMKTPTKVMIGERDELAANKRITQSVEVLDPRAKEGRLLDLLRQYANDDFKILIFALYKKEATRVENTLTRRGYGVAAIHGDLSQQQRTKALDEFKKGEKNILLATDVAARGLDIPNVKLVINLTFPLTVEDYVHRIGRTGRAGKTGQAITLFTEHEKHLSGALINVLRGADQPVPDELLKFGGHTKKKEHGAYGAFFKDVDMTKKAKKITFD.

The segment at 1–78 (MGKRDRTEDD…EVAEEKPKMT (78 aa)) is disordered. Positions 15–58 (KKVKLDKKDKKEKKEKKDKKDKKDKKDKKDKKDKKEKKEKKEKK) are enriched in basic residues. The Q motif signature appears at 126-152 (MEFSHVTLDPRITKVLTKFPRPTPIQA). The Helicase ATP-binding domain maps to 155-327 (WPYLLAGKDM…EGFMKTPTKV (173 aa)). An ATP-binding site is contributed by 168–175 (AETGSGKT). The short motif at 274-277 (DEAD) is the DEAD box element. Residues 356-502 (RLLDLLRQYA…PVPDELLKFG (147 aa)) enclose the Helicase C-terminal domain.

Belongs to the DEAD box helicase family. DDX5/DBP2 subfamily.

The protein localises to the nucleus. Its subcellular location is the nucleolus. It carries out the reaction ATP + H2O = ADP + phosphate + H(+). Its function is as follows. ATP-dependent RNA helicase required for 60S ribosomal subunit synthesis. Involved in efficient pre-rRNA processing, predominantly at site A3, which is necessary for the normal formation of 25S and 5.8S rRNAs. The sequence is that of ATP-dependent RNA helicase DBP3 (DBP3) from Yarrowia lipolytica (strain CLIB 122 / E 150) (Yeast).